The sequence spans 492 residues: Catalase isozyme B (492 aa).

Residues 1–20 (MDPYKHRPSSGSNSTFWTTN) form a disordered region. Polar residues predominate over residues 9-20 (SSGSNSTFWTTN). Arg-62 contributes to the heme binding site. Residue His-65 is part of the active site. Arg-102 contributes to the heme binding site. The active site involves Asn-138. Residue Phe-151 participates in heme binding. Position 210 is a phosphotyrosine (Tyr-210). The segment at residues 325–348 (CPAIIVPGIHYSDDKLLQTRIFSY) is a cross-link (3-(S-cysteinyl)-tyrosine (Cys-Tyr)). Arg-344, Tyr-348, and Arg-355 together coordinate heme. The Peroxisome targeting signal signature appears at 484–492 (SRLNLKPNM).

It belongs to the catalase family. In terms of assembly, homotetramer. Interacts with GLO1 and GLO4; these interactions are disturbed by alpha-hydroxy-2-pyridinemethanesulfonic acid (HPMS) and salicylic acid (SA). Interacts with STRK1 at the plasma membrane. It depends on heme as a cofactor. Predominantly expressed in roots and, at low levels, in leaves (e.g. sheaths). Detected in seeds. Also present in panicles and culms. Observed in stems and anthers.

It is found in the peroxisome. The protein resides in the glyoxysome. It localises to the cell membrane. It carries out the reaction 2 H2O2 = O2 + 2 H2O. Strongly inhibited by beta-mercaptoethanol, sodium azide and potassium cyanide. Slightly repressed by 3-amino-1,2,4-triazole (3-AT). Activity is repressed proportionally to increased concentration of NaCl, KCl, LiCl and MgCl(2). In terms of biological role, occurs in almost all aerobically respiring organisms and serves to protect cells from the toxic effects of hydrogen peroxide. May prevent the excessive accumulation of H(2)O(2) during water stress in response to the accumulation of abscisic acid (ABA). Involved in the modulation of ROS levels related to root growth regulation. Required for pollen viability and floret fertility upon heat stress (HS) by detoxifying reactive oxygen species (ROS) and malondialdehyde (MDA) accumulation in developing anthers exposed to HS. The polypeptide is Catalase isozyme B (CATB) (Oryza sativa subsp. japonica (Rice)).